Reading from the N-terminus, the 266-residue chain is Ribosomal RNA small subunit methyltransferase A (266 aa).

Positions 11, 13, 37, 57, 85, and 104 each coordinate S-adenosyl-L-methionine.

It belongs to the class I-like SAM-binding methyltransferase superfamily. rRNA adenine N(6)-methyltransferase family. RsmA subfamily.

It is found in the cytoplasm. The catalysed reaction is adenosine(1518)/adenosine(1519) in 16S rRNA + 4 S-adenosyl-L-methionine = N(6)-dimethyladenosine(1518)/N(6)-dimethyladenosine(1519) in 16S rRNA + 4 S-adenosyl-L-homocysteine + 4 H(+). Functionally, specifically dimethylates two adjacent adenosines (A1518 and A1519) in the loop of a conserved hairpin near the 3'-end of 16S rRNA in the 30S particle. May play a critical role in biogenesis of 30S subunits. The chain is Ribosomal RNA small subunit methyltransferase A from Campylobacter jejuni subsp. jejuni serotype O:2 (strain ATCC 700819 / NCTC 11168).